The primary structure comprises 304 residues: tRNA-5-methyluridine(54) 2-sulfurtransferase (304 aa).

The Zn(2+) site is built by Cys3, Cys6, Cys22, and His25. 2 residues coordinate ATP: Ala53 and Ile79. Residues Cys131 and Cys134 each contribute to the [4Fe-4S] cluster site. 2 residues coordinate ATP: Arg138 and Gly157. Cys224 provides a ligand contact to [4Fe-4S] cluster. Residues Cys274, Cys277, Cys286, and Cys289 each contribute to the Zn(2+) site.

It belongs to the TtcA family. TtuA subfamily. In terms of assembly, homodimer. Requires [4Fe-4S] cluster as cofactor. It depends on Mg(2+) as a cofactor.

The catalysed reaction is 5-methyluridine(54) in tRNA + hydrogen sulfide + ATP = 5-methyl-2-thiouridine(54) in tRNA + AMP + diphosphate. The protein operates within tRNA modification. Functionally, catalyzes the ATP-dependent 2-thiolation of 5-methyluridine residue at position 54 in the T loop of tRNAs, leading to 5-methyl-2-thiouridine (m(5)s(2)U or s(2)T). This modification allows thermal stabilization of tRNAs in thermophilic microorganisms, and is required for cell growth at high temperatures. Can use free sulfide as sulfur source in vitro. The protein is tRNA-5-methyluridine(54) 2-sulfurtransferase of Thermotoga maritima (strain ATCC 43589 / DSM 3109 / JCM 10099 / NBRC 100826 / MSB8).